The sequence spans 130 residues: Protein ApaG (130 aa).

The ApaG domain maps to arginine 3 to arginine 127.

The chain is Protein ApaG from Bradyrhizobium diazoefficiens (strain JCM 10833 / BCRC 13528 / IAM 13628 / NBRC 14792 / USDA 110).